The chain runs to 117 residues: Large ribosomal subunit protein bL20 (117 aa).

This sequence belongs to the bacterial ribosomal protein bL20 family.

Binds directly to 23S ribosomal RNA and is necessary for the in vitro assembly process of the 50S ribosomal subunit. It is not involved in the protein synthesizing functions of that subunit. The protein is Large ribosomal subunit protein bL20 of Rickettsia typhi (strain ATCC VR-144 / Wilmington).